We begin with the raw amino-acid sequence, 2754 residues long: Neurobeachin-like protein 2 (2754 aa).

Disordered regions lie at residues 1298-1338 (TAGS…SEAP) and 1364-1438 (SVGS…QQTS). Pro residues-rich tracts occupy residues 1301–1323 (SPPP…PPTE) and 1388–1400 (TPSP…PFPA). Over residues 1425 to 1437 (GDDTSNTSNPQQT) the composition is skewed to polar residues. S1647 is subject to Phosphoserine. T1867 is modified (phosphothreonine). In terms of domain architecture, BEACH-type PH spans 1915-2040 (EQREKLVLSA…VRNQVYSWLL (126 aa)). The BEACH domain occupies 2053 to 2345 (RSPQEMLRAS…QLLKEPHPTR (293 aa)). WD repeat units lie at residues 2386 to 2424 (LVLA…SWLP), 2448 to 2491 (RLLS…ALPR), 2494 to 2531 (LLSQ…VWRL), 2544 to 2582 (KPVQ…IHTV), 2589 to 2631 (AALR…TYSL), 2639 to 2674 (KLRA…ILQL), and 2682 to 2717 (PPLP…VVAG). Phosphoserine is present on residues S2739 and S2742.

It belongs to the WD repeat neurobeachin family. As to expression, expressed in megakaryocytes.

Its subcellular location is the endoplasmic reticulum. Functionally, probably involved in thrombopoiesis. Plays a role in the development or secretion of alpha-granules, that contain several growth factors important for platelet biogenesis. In Homo sapiens (Human), this protein is Neurobeachin-like protein 2 (NBEAL2).